The sequence spans 242 residues: Ubiquitin-conjugating enzyme E2 6 (242 aa).

Residues 1-217 lie on the Cytoplasmic side of the membrane; that stretch reads MASRQAYKRL…QPAGNGTTSN (217 aa). Residues 5–163 form the UBC core domain; that stretch reads QAYKRLSKEY…FPELAEQNRR (159 aa). The active-site Glycyl thioester intermediate is the Cys-87. Residues 218–240 traverse the membrane as a helical segment; the sequence is SIGRSLLFVLFSLAALLVAVCYT.

Belongs to the ubiquitin-conjugating enzyme family.

Its subcellular location is the endoplasmic reticulum membrane. It catalyses the reaction S-ubiquitinyl-[E1 ubiquitin-activating enzyme]-L-cysteine + [E2 ubiquitin-conjugating enzyme]-L-cysteine = [E1 ubiquitin-activating enzyme]-L-cysteine + S-ubiquitinyl-[E2 ubiquitin-conjugating enzyme]-L-cysteine.. It functions in the pathway protein modification; protein ubiquitination. Its function is as follows. Catalyzes the covalent attachment of ubiquitin to other proteins. Functions in degradation of misfolded or regulated proteins localized in the endoplasmic reticulum (ER) lumen or membrane via the ubiquitin-proteasome system. Cognate E2 conjugating enzyme for the DOA10 ubiquitin ligase complex, which is part of the ERAD-C pathway responsible for the rapid degradation of membrane proteins with misfolded cytoplasmic domains. The protein is Ubiquitin-conjugating enzyme E2 6 (UBC6) of Eremothecium gossypii (strain ATCC 10895 / CBS 109.51 / FGSC 9923 / NRRL Y-1056) (Yeast).